The chain runs to 491 residues: Glucose-6-phosphate 1-dehydrogenase (491 aa).

NADP(+) contacts are provided by residues R50, 92–93 (DV), and K147. The substrate site is built by H177, K181, E215, and D234. Residue H239 is the Proton acceptor of the active site. K339 and K344 together coordinate substrate.

The protein belongs to the glucose-6-phosphate dehydrogenase family.

The enzyme catalyses D-glucose 6-phosphate + NADP(+) = 6-phospho-D-glucono-1,5-lactone + NADPH + H(+). It participates in carbohydrate degradation; pentose phosphate pathway; D-ribulose 5-phosphate from D-glucose 6-phosphate (oxidative stage): step 1/3. Functionally, catalyzes the oxidation of glucose 6-phosphate to 6-phosphogluconolactone. This Dickeya dadantii (strain 3937) (Erwinia chrysanthemi (strain 3937)) protein is Glucose-6-phosphate 1-dehydrogenase.